The following is a 107-amino-acid chain: MSEADSSSGFAGSVENGTFLELFPTSLSTSVDSSSGHLSNVYIYVSIFLSLLAFLLLLLIIALQRLKNIISSSSSYPEYPSDAGSSFTNLEVCSISSQRSTFSNLSS.

The helical transmembrane segment at 43–63 (IYVSIFLSLLAFLLLLLIIAL) threads the bilayer.

Its subcellular location is the membrane. This Mus musculus (Mouse) protein is Serine-rich and transmembrane domain-containing protein 1 (Sertm1).